A 364-amino-acid polypeptide reads, in one-letter code: MGALCSSETYMLDKEEYKKQVEHNKSIENDLEKDRKIKILKLLILGPGESGKSTTIKQIKIIHDEGYSAEEKMVRKHGIYMNILEGIEEIHLSVGRENKSYKNPLSFDHINEVRMFTENFKKADDSEKLLGPEVINAIQKYIKDETIAMMLRDKTVYNIDDSTIYFLENFSRIIQKDYLPTEEDILKSRVPTSGVIQYKIMLKNFNFRIFDVGGQRAQRRKWLHVFDDVQAVLFITSLSEYDQVLREDATVNRMKESLNLFEKICNGRYFLNTAMILFLNKIDLFKIKIKHTNITVALTSYKGPQECDSALDYIRKRFISLNKNKKRSIYEHVTCATDTEQIQVVIDSVIDVVIQHTMQKVGIQ.

A lipid anchor (N-myristoyl glycine) is attached at G2. C5 carries the S-palmitoyl cysteine lipid modification. A G-alpha domain is found at 38–364 (KILKLLILGP…QHTMQKVGIQ (327 aa)). Positions 41-54 (KLLILGPGESGKST) are G1 motif. GTP contacts are provided by residues 46 to 53 (GPGESGKS), 186 to 192 (LKSRVPT), 211 to 215 (DVGGQ), 280 to 283 (NKID), and A336. The Mg(2+) site is built by S53 and T192. The tract at residues 184–192 (DILKSRVPT) is G2 motif. The interval 207 to 216 (FRIFDVGGQR) is G3 motif. Residues 276–283 (ILFLNKID) form a G4 motif region. The interval 334-339 (TCATDT) is G5 motif.

The protein belongs to the G-alpha family. In terms of assembly, g proteins are composed of 3 units; alpha, beta and gamma. The alpha chain contains the guanine nucleotide binding site.

Functionally, guanine nucleotide-binding proteins (G proteins) are involved as modulators or transducers in various transmembrane signaling systems. The polypeptide is Guanine nucleotide-binding protein alpha-8 subunit (gpa-8) (Caenorhabditis elegans).